The primary structure comprises 138 residues: Putative pre-16S rRNA nuclease (138 aa).

This sequence belongs to the YqgF nuclease family.

It localises to the cytoplasm. In terms of biological role, could be a nuclease involved in processing of the 5'-end of pre-16S rRNA. In Citrobacter koseri (strain ATCC BAA-895 / CDC 4225-83 / SGSC4696), this protein is Putative pre-16S rRNA nuclease.